The primary structure comprises 1202 residues: Inner capsid protein VP3 (1202 aa).

Disordered regions lie at residues 1-45 and 73-99; these read MRPI…SGKI and YTSKDSVQHGGSSITYTSNTTGNPRVT. A compositionally biased stretch (basic and acidic residues) spans 10-21; it reads NQERTTTKHQET. Residues 27–45 show a composition bias toward polar residues; sequence NEQTTSDQRFTRSSNSGKI.

Belongs to the turreted BTV-fold inner capsid family. As to quaternary structure, homodecamer; each decamer is made up of two conformers of VP2, called VP2A and VP2B. 12 homodecamers assemble to form an icosahedral capsid.

Its subcellular location is the virion. In terms of biological role, inner capsid protein that self-assembles to form an icosahedral capsid with a T=2 symmetry, which consists of 120 copies of VP2, with channels at each of its five-fold vertices. This capsid constitutes the innermost concentric layer of the viral mature particle. The polypeptide is Inner capsid protein VP3 (S3) (Aedes pseudoscutellaris reovirus (isolate France) (ApRV)).